A 274-amino-acid chain; its full sequence is Octanoyltransferase LipM (274 aa).

A BPL/LPL catalytic domain is found at 32-244; it reads GEVPPTLRFY…GFARALGLTL (213 aa). The Acyl-thioester intermediate role is filled by cysteine 146.

The protein belongs to the octanoyltransferase LipM family. In terms of assembly, monomer.

The catalysed reaction is octanoyl-[ACP] + L-lysyl-[protein] = N(6)-octanoyl-L-lysyl-[protein] + holo-[ACP] + H(+). Its pathway is protein modification; protein lipoylation via endogenous pathway; protein N(6)-(lipoyl)lysine from octanoyl-[acyl-carrier-protein]. Functionally, catalyzes the transfer of endogenously produced octanoic acid from octanoyl-acyl-carrier-protein onto the lipoyl domain of GcvH, an intermediate carrier during protein lipoylation. The sequence is that of Octanoyltransferase LipM from Symbiobacterium thermophilum (strain DSM 24528 / JCM 14929 / IAM 14863 / T).